Reading from the N-terminus, the 150-residue chain is 3-hydroxyacyl-[acyl-carrier-protein] dehydratase FabZ (150 aa).

H56 is an active-site residue.

This sequence belongs to the thioester dehydratase family. FabZ subfamily.

The protein resides in the cytoplasm. The catalysed reaction is a (3R)-hydroxyacyl-[ACP] = a (2E)-enoyl-[ACP] + H2O. In terms of biological role, involved in unsaturated fatty acids biosynthesis. Catalyzes the dehydration of short chain beta-hydroxyacyl-ACPs and long chain saturated and unsaturated beta-hydroxyacyl-ACPs. The polypeptide is 3-hydroxyacyl-[acyl-carrier-protein] dehydratase FabZ (Desulfotalea psychrophila (strain LSv54 / DSM 12343)).